Consider the following 404-residue polypeptide: Putative glutamate--cysteine ligase 2 (404 aa).

The segment at 377 to 404 (GPAGKRAHEGGRSFRPAAGAPMSIRGQE) is disordered.

It belongs to the glutamate--cysteine ligase type 2 family. YbdK subfamily.

It carries out the reaction L-cysteine + L-glutamate + ATP = gamma-L-glutamyl-L-cysteine + ADP + phosphate + H(+). In terms of biological role, ATP-dependent carboxylate-amine ligase which exhibits weak glutamate--cysteine ligase activity. This Pseudomonas aeruginosa (strain UCBPP-PA14) protein is Putative glutamate--cysteine ligase 2.